Reading from the N-terminus, the 92-residue chain is DNA-directed RNA polymerase subunit Rpo11 (92 aa).

This sequence belongs to the archaeal Rpo11/eukaryotic RPB11/RPC19 RNA polymerase subunit family. As to quaternary structure, part of the RNA polymerase complex.

It is found in the cytoplasm. The catalysed reaction is RNA(n) + a ribonucleoside 5'-triphosphate = RNA(n+1) + diphosphate. Its function is as follows. DNA-dependent RNA polymerase (RNAP) catalyzes the transcription of DNA into RNA using the four ribonucleoside triphosphates as substrates. This Halorubrum lacusprofundi (strain ATCC 49239 / DSM 5036 / JCM 8891 / ACAM 34) protein is DNA-directed RNA polymerase subunit Rpo11.